Consider the following 495-residue polypeptide: Polybrominated aromatic compounds synthase (495 aa).

Position 437 (Cys-437) interacts with heme.

It belongs to the cytochrome P450 family. Requires heme as cofactor.

Cytochrome P450 protein involved in the biosynthesis of polybrominated aromatic organic compounds. In the presence of ferredoxin, ferredoxin reductase and NADH, catalyzes the coupling of bromophenols and bromopyrroles, forming various polybrominated biphenyls and hydroxylated polybrominated diphenyl ethers (OH-BDE). Can also mediate the heterocoupling of 3,5-dibromocatechol, forming six different compounds, including polybrominated dibenzo-p-dioxins, which are among the most toxic molecules known to man. The protein is Polybrominated aromatic compounds synthase of Marinomonas mediterranea (strain ATCC 700492 / JCM 21426 / NBRC 103028 / MMB-1).